A 404-amino-acid polypeptide reads, in one-letter code: Voltage-gated potassium channel subunit beta-3 (404 aa).

Residues 1–14 (MQVSIACTEQNLRS) show a composition bias toward polar residues. Positions 1–78 (MQVSIACTEQ…RESTGRGTGM (78 aa)) are disordered. A compositionally biased stretch (gly residues) spans 28 to 50 (PGGGNGGPVGGGHGNPPGGGGLG). The NADP(+) site is built by Thr-97, Trp-98, Gln-104, and Asp-126. Catalysis depends on Tyr-131, which acts as the Proton donor/acceptor. NADP(+) is bound by residues Asn-199, Ser-229, Arg-230, Gln-255, Trp-284, Ser-285, Pro-286, Leu-287, Ala-288, Cys-289, Lys-295, Lys-305, Gly-364, Ser-366, Gln-370, and Glu-373.

The protein belongs to the shaker potassium channel beta subunit family. In terms of assembly, forms heteromultimeric complex with alpha subunits. Interacts with KCNA5 and KCNB2. As to expression, predominantly expressed in brain. Strongest expression in olfactory bulb and thalamic nuclei. Not detected in heart, spleen, lung, liver, skeletal muscle, kidney and testis.

It localises to the cytoplasm. Regulatory subunit of the voltage-gated potassium (Kv) channels composed of pore-forming and potassium-conducting alpha subunits and of regulatory beta subunits. The beta-3/KCNAB3 subunit may mediate closure of potassium channels. Inactivates Kv1.4/KCNA4 alpha subunit-containing Kv channel current but not Kv1.1/KCNA1 or Kv1.5/KCNA5 channels. May display nicotinamide adenine dinucleotide phosphate (NADPH)-dependent aldoketoreductase activity. The binding of oxidized and reduced NADP(H) cofactors may be required for the regulation of potassium channel activity. The protein is Voltage-gated potassium channel subunit beta-3 of Rattus norvegicus (Rat).